The chain runs to 102 residues: Large ribosomal subunit protein bL21 (102 aa).

This sequence belongs to the bacterial ribosomal protein bL21 family. As to quaternary structure, part of the 50S ribosomal subunit. Contacts protein L20.

Functionally, this protein binds to 23S rRNA in the presence of protein L20. In Finegoldia magna (strain ATCC 29328 / DSM 20472 / WAL 2508) (Peptostreptococcus magnus), this protein is Large ribosomal subunit protein bL21.